Reading from the N-terminus, the 300-residue chain is Protein CANDIDATE G-PROTEIN COUPLED RECEPTOR 2 (300 aa).

7 consecutive transmembrane segments (helical) span residues glycine 37 to tyrosine 57, isoleucine 73 to cysteine 93, leucine 110 to phenylalanine 130, isoleucine 152 to isoleucine 172, tryptophan 183 to methionine 203, isoleucine 222 to glycine 242, and phenylalanine 245 to leucine 265.

This sequence belongs to the UPF0359 family. Interacts with GPA1. As to expression, expressed at low levels in seedlings.

Its subcellular location is the cell membrane. Functionally, plays a role in plants and microbes interactions. G-protein coupled melatonin receptor involved in root growth mediated by the bacterial quorum-sensing signals N-acyl-homoserine lactones (AHLs). Binds to melatonin. Phytomelatonin receptor required, in collaboration with GPA1, for melatonin-mediated stomatal closure involving H(2)O(2) and Ca(2+) signals. Essential for melatonin-mediated plant response to osmotic stress probably by activating reactive oxygen species (ROS) scavenging ability. The protein is Protein CANDIDATE G-PROTEIN COUPLED RECEPTOR 2 of Arabidopsis thaliana (Mouse-ear cress).